The sequence spans 271 residues: Regulatory protein RecX (271 aa).

This sequence belongs to the RecX family.

The protein resides in the cytoplasm. Functionally, modulates RecA activity. In Lactobacillus delbrueckii subsp. bulgaricus (strain ATCC BAA-365 / Lb-18), this protein is Regulatory protein RecX.